The sequence spans 188 residues: Elongation factor P (188 aa).

Belongs to the elongation factor P family.

It is found in the cytoplasm. Its pathway is protein biosynthesis; polypeptide chain elongation. Involved in peptide bond synthesis. Stimulates efficient translation and peptide-bond synthesis on native or reconstituted 70S ribosomes in vitro. Probably functions indirectly by altering the affinity of the ribosome for aminoacyl-tRNA, thus increasing their reactivity as acceptors for peptidyl transferase. The polypeptide is Elongation factor P (Leptospira biflexa serovar Patoc (strain Patoc 1 / Ames)).